A 946-amino-acid polypeptide reads, in one-letter code: MSVRLRFLSPGDTGAVGVVGRSASFAGFSSAQSRRIAKSINRNSVRSRMPAKSSKMYGTLRKGSVCADPKPQQVKKIFEALKRGLKEYLCVQQAELDHLSGRHKDTRRNSRLAFYYDLDKQTRCVERHIRKMEFHISKVDELYEDYCIQCRLRDGASSMQRAFARCPPSRAARESLQELGRSLHECAEDMWLIEGALEVHLGEFHIRMKGLVGYARLCPGDHYEVLMRLGRQRWKLKGRIESDDSQTWDEEEKAFIPTLHENLDIKVTELRGLGSLAVGAVTCDIADFFTTRPQVIVVDITELGTIKLQLEVQWNPFDTESFLVSPSPTGKFSMGSRKGSLYNWTPPSTPSFRERYYLSVLQQPTQQALLLGGPRATSILSYLSDSDLRGPSLRSQSQELPEMDSFSSEDPRDTETSTSASTSDVGFLPLTFGPHASIEEEAREDPLPPGLLPEMAHLSGGPFAEQPGWRNLGGESPSLPQGSLFHSGTASSSQNGHEEGATGDREDGPGVALEGPLQEVLELLRPTDSTQPQLRELEYQVLGFRDRLKPCRARQEHTSAESLMECILESFAFLNADFALDELSLFGGSQGLRKDRPLPPPSSLKASSRELTAGAPELDVLLMVHLQVCKALLQKLASPNLSRLVQECLLEEVAQQKHVLETLSVLDFEKVGKATSIEEIIPQASRTKGCLKLWRGCTGPGRVLSCPATTLLNQLKKTFQHRVRGKYPGQLEIACRRLLEQVVSCGGLLPGAGLPEEQIITWFQFHSYLQRQSVSDLEKHFTQLTKEVTLIEELHCAGQAKVVRKLQGKRLGQLQPLPQTLRAWALLQLDGTPRVCRAASARLAGAVRNRSFREKALLFYTNALAENDARLQQAACLALKHLKGIESIDQTASLCQSDLEAVRAAARETTLSFGEKGRLAFEKMDKLCSEQREVFCQEADVEITIF.

A phosphoserine mark is found at Ser-9, Ser-24, and Ser-340. Thr-345 is subject to Phosphothreonine. Phosphoserine is present on residues Ser-351 and Ser-384. The tract at residues 390–512 (GPSLRSQSQE…GDREDGPGVA (123 aa)) is disordered. Residues 437–446 (SIEEEAREDP) show a composition bias toward basic and acidic residues. A compositionally biased stretch (polar residues) spans 478–495 (SLPQGSLFHSGTASSSQN). A compositionally biased stretch (basic and acidic residues) spans 496 to 508 (GHEEGATGDREDG).

It belongs to the RIPOR family.

The polypeptide is RIPOR family member 3 (Homo sapiens (Human)).